We begin with the raw amino-acid sequence, 136 residues long: Small ribosomal subunit protein uS19 (136 aa).

Belongs to the universal ribosomal protein uS19 family.

In terms of biological role, protein S19 forms a complex with S13 that binds strongly to the 16S ribosomal RNA. In Methanothrix thermoacetophila (strain DSM 6194 / JCM 14653 / NBRC 101360 / PT) (Methanosaeta thermophila), this protein is Small ribosomal subunit protein uS19.